The following is a 448-amino-acid chain: Asparagine--tRNA ligase (448 aa).

Belongs to the class-II aminoacyl-tRNA synthetase family. In terms of assembly, homodimer.

Its subcellular location is the cytoplasm. It carries out the reaction tRNA(Asn) + L-asparagine + ATP = L-asparaginyl-tRNA(Asn) + AMP + diphosphate + H(+). This Streptococcus thermophilus (strain ATCC BAA-491 / LMD-9) protein is Asparagine--tRNA ligase.